Consider the following 582-residue polypeptide: Aspartate--tRNA ligase (582 aa).

Residue Glu174 participates in L-aspartate binding. Residues 198–201 are aspartate; that stretch reads QITK. Arg220 lines the L-aspartate pocket. ATP-binding positions include 220 to 222 and Gln229; that span reads RDE. His443 lines the L-aspartate pocket. Residue Glu477 coordinates ATP. Arg484 serves as a coordination point for L-aspartate. 529–532 lines the ATP pocket; that stretch reads GLDR.

It belongs to the class-II aminoacyl-tRNA synthetase family. Type 1 subfamily. As to quaternary structure, homodimer.

The protein resides in the cytoplasm. The enzyme catalyses tRNA(Asp) + L-aspartate + ATP = L-aspartyl-tRNA(Asp) + AMP + diphosphate. Catalyzes the attachment of L-aspartate to tRNA(Asp) in a two-step reaction: L-aspartate is first activated by ATP to form Asp-AMP and then transferred to the acceptor end of tRNA(Asp). The protein is Aspartate--tRNA ligase of Streptococcus pyogenes serotype M1.